We begin with the raw amino-acid sequence, 255 residues long: tRNA (guanine-N(1)-)-methyltransferase (255 aa).

S-adenosyl-L-methionine-binding positions include glycine 119 and 139–144; that span reads IGDFIL.

The protein belongs to the RNA methyltransferase TrmD family. Homodimer.

The protein localises to the cytoplasm. The catalysed reaction is guanosine(37) in tRNA + S-adenosyl-L-methionine = N(1)-methylguanosine(37) in tRNA + S-adenosyl-L-homocysteine + H(+). Its function is as follows. Specifically methylates guanosine-37 in various tRNAs. The sequence is that of tRNA (guanine-N(1)-)-methyltransferase from Pseudoalteromonas translucida (strain TAC 125).